We begin with the raw amino-acid sequence, 301 residues long: MNSYESRGHLLTEQVNPQSQNLDQMSALELVDLFNQEDQKTLEAIANAREALAQAIEITSEALMHGGRLFYVGAGTSGRLGVLDAAECPPTFCTPPELVQGIIAGGAGALVRSSEDLEDRAEDGKKAIAQRQITELDVVVGITAGGTTPYVQGALIAAQQRGAKTIFISCVPAEQVPFAAAVDIRLLTGPEILAGSTRLKAGTVTKMALNILSTSVMVKLGKVYGNRMIDVAVTNHKLHDRALRILQDLTDLSREEAAILLEKSQRRVKIALLMHWKNVDASEAEHLLKVHQGSLRTALKS.

Residues 59-222 (TSEALMHGGR…STSVMVKLGK (164 aa)) form the SIS domain. The Proton donor role is filled by Glu87. Residue Glu118 is part of the active site.

It belongs to the GCKR-like family. MurNAc-6-P etherase subfamily. Homodimer.

It catalyses the reaction N-acetyl-D-muramate 6-phosphate + H2O = N-acetyl-D-glucosamine 6-phosphate + (R)-lactate. The protein operates within amino-sugar metabolism; N-acetylmuramate degradation. In terms of biological role, specifically catalyzes the cleavage of the D-lactyl ether substituent of MurNAc 6-phosphate, producing GlcNAc 6-phosphate and D-lactate. In Picosynechococcus sp. (strain ATCC 27264 / PCC 7002 / PR-6) (Agmenellum quadruplicatum), this protein is N-acetylmuramic acid 6-phosphate etherase.